Reading from the N-terminus, the 43-residue chain is METATLIAISISGLLVSFTGYALYTAFGQPSQQLRDPFEEHGD.

Residues 5-27 traverse the membrane as a helical segment; that stretch reads TLIAISISGLLVSFTGYALYTAF.

The protein belongs to the PsbN family.

Its subcellular location is the plastid. The protein localises to the chloroplast thylakoid membrane. May play a role in photosystem I and II biogenesis. This is Protein PsbN from Phaseolus vulgaris (Kidney bean).